The sequence spans 245 residues: Zinc finger CCCH domain-containing protein 54 (245 aa).

A C3H1-type zinc finger spans residues 92 to 119 (TYCAVACPAFRNGACHRGDSCEFAHGVF). The tract at residues 175–204 (GNGDGVTMRMDDEGYDTSRSPVRSGKDDLD) is disordered.

Interacts with MARD1/FLZ9 and RD21A. Specifically expressed in embryo (at protein level).

Its subcellular location is the nucleus. Its function is as follows. Embryo-specific transcription factor required at the globular to heart stage transition in embryo development. The sequence is that of Zinc finger CCCH domain-containing protein 54 from Arabidopsis thaliana (Mouse-ear cress).